The following is a 300-amino-acid chain: UDP-N-acetylenolpyruvoylglucosamine reductase (300 aa).

The 166-residue stretch at 27 to 192 (KVGGPADYLA…ISAKFALKPG (166 aa)) folds into the FAD-binding PCMH-type domain. Arg171 is a catalytic residue. Ser221 serves as the catalytic Proton donor. The active site involves Glu291.

The protein belongs to the MurB family. FAD serves as cofactor.

It localises to the cytoplasm. It catalyses the reaction UDP-N-acetyl-alpha-D-muramate + NADP(+) = UDP-N-acetyl-3-O-(1-carboxyvinyl)-alpha-D-glucosamine + NADPH + H(+). It participates in cell wall biogenesis; peptidoglycan biosynthesis. In terms of biological role, cell wall formation. The protein is UDP-N-acetylenolpyruvoylglucosamine reductase of Streptococcus agalactiae serotype Ia (strain ATCC 27591 / A909 / CDC SS700).